A 234-amino-acid chain; its full sequence is Phycobilisome rod-core linker polypeptide cpcG (234 aa).

Residues 11–191 (SSQNHRVNSF…PRYGSDFKER (181 aa)) enclose the PBS-linker domain.

Belongs to the phycobilisome linker protein family. As to quaternary structure, the phycobilisome is a hemidiscoidal structure that is composed of two distinct substructures: a core complex and a number of rods radiating from the core.

The protein localises to the plastid. It is found in the chloroplast thylakoid membrane. Rod-core linker protein required for attachment of phycocyanin to allophycocyanin in cores of phycobilisomes. Functionally, linker polypeptides determine the state of aggregation and the location of the disk-shaped phycobiliprotein units within the phycobilisome and modulate their spectroscopic properties in order to mediate a directed and optimal energy transfer. This Cyanidium caldarium (Red alga) protein is Phycobilisome rod-core linker polypeptide cpcG (cpcG).